Here is a 293-residue protein sequence, read N- to C-terminus: 4-hydroxy-tetrahydrodipicolinate synthase (293 aa).

A pyruvate-binding site is contributed by Thr45. Tyr133 (proton donor/acceptor) is an active-site residue. Lys161 acts as the Schiff-base intermediate with substrate in catalysis. Residue Ile203 participates in pyruvate binding.

Belongs to the DapA family. Homotetramer; dimer of dimers.

Its subcellular location is the cytoplasm. The enzyme catalyses L-aspartate 4-semialdehyde + pyruvate = (2S,4S)-4-hydroxy-2,3,4,5-tetrahydrodipicolinate + H2O + H(+). The protein operates within amino-acid biosynthesis; L-lysine biosynthesis via DAP pathway; (S)-tetrahydrodipicolinate from L-aspartate: step 3/4. Its function is as follows. Catalyzes the condensation of (S)-aspartate-beta-semialdehyde [(S)-ASA] and pyruvate to 4-hydroxy-tetrahydrodipicolinate (HTPA). The protein is 4-hydroxy-tetrahydrodipicolinate synthase of Aliivibrio salmonicida (strain LFI1238) (Vibrio salmonicida (strain LFI1238)).